Here is a 132-residue protein sequence, read N- to C-terminus: Fertilization-influencing membrane protein (132 aa).

The helical transmembrane segment at 100-120 (PGLFHHILVGLLVVAFFFLLF) threads the bilayer.

Testis-specific.

The protein localises to the cell membrane. Functionally, may play a role in sperm-oocyte fusion during fertilization. This chain is Fertilization-influencing membrane protein, found in Homo sapiens (Human).